A 360-amino-acid polypeptide reads, in one-letter code: Ribosomal RNA large subunit methyltransferase M (360 aa).

S-adenosyl-L-methionine is bound by residues Ser-187, 220-223, Asp-239, Asp-259, and Asp-276; that span reads CPGG. The Proton acceptor role is filled by Lys-305.

The protein belongs to the class I-like SAM-binding methyltransferase superfamily. RNA methyltransferase RlmE family. RlmM subfamily. Monomer.

Its subcellular location is the cytoplasm. It carries out the reaction cytidine(2498) in 23S rRNA + S-adenosyl-L-methionine = 2'-O-methylcytidine(2498) in 23S rRNA + S-adenosyl-L-homocysteine + H(+). Its function is as follows. Catalyzes the 2'-O-methylation at nucleotide C2498 in 23S rRNA. This chain is Ribosomal RNA large subunit methyltransferase M, found in Shewanella halifaxensis (strain HAW-EB4).